Consider the following 257-residue polypeptide: Imidazole glycerol phosphate synthase subunit HisF (257 aa).

Active-site residues include Asp12 and Asp131.

This sequence belongs to the HisA/HisF family. Heterodimer of HisH and HisF.

The protein localises to the cytoplasm. The catalysed reaction is 5-[(5-phospho-1-deoxy-D-ribulos-1-ylimino)methylamino]-1-(5-phospho-beta-D-ribosyl)imidazole-4-carboxamide + L-glutamine = D-erythro-1-(imidazol-4-yl)glycerol 3-phosphate + 5-amino-1-(5-phospho-beta-D-ribosyl)imidazole-4-carboxamide + L-glutamate + H(+). The protein operates within amino-acid biosynthesis; L-histidine biosynthesis; L-histidine from 5-phospho-alpha-D-ribose 1-diphosphate: step 5/9. Functionally, IGPS catalyzes the conversion of PRFAR and glutamine to IGP, AICAR and glutamate. The HisF subunit catalyzes the cyclization activity that produces IGP and AICAR from PRFAR using the ammonia provided by the HisH subunit. In Burkholderia lata (strain ATCC 17760 / DSM 23089 / LMG 22485 / NCIMB 9086 / R18194 / 383), this protein is Imidazole glycerol phosphate synthase subunit HisF.